A 405-amino-acid chain; its full sequence is Acetylornithine aminotransferase 1 (405 aa).

Pyridoxal 5'-phosphate is bound by residues 103–104 (GA) and Phe136. Arg139 provides a ligand contact to N(2)-acetyl-L-ornithine. 221-224 (DEVQ) contributes to the pyridoxal 5'-phosphate binding site. The residue at position 250 (Lys250) is an N6-(pyridoxal phosphate)lysine. Ser278 contributes to the N(2)-acetyl-L-ornithine binding site. Pyridoxal 5'-phosphate is bound at residue Thr279.

The protein belongs to the class-III pyridoxal-phosphate-dependent aminotransferase family. ArgD subfamily. As to quaternary structure, homodimer. The cofactor is pyridoxal 5'-phosphate.

It is found in the cytoplasm. The catalysed reaction is N(2)-acetyl-L-ornithine + 2-oxoglutarate = N-acetyl-L-glutamate 5-semialdehyde + L-glutamate. It functions in the pathway amino-acid biosynthesis; L-arginine biosynthesis; N(2)-acetyl-L-ornithine from L-glutamate: step 4/4. The protein is Acetylornithine aminotransferase 1 of Bradyrhizobium diazoefficiens (strain JCM 10833 / BCRC 13528 / IAM 13628 / NBRC 14792 / USDA 110).